A 146-amino-acid polypeptide reads, in one-letter code: [Ribosomal protein bS18]-alanine N-acetyltransferase (146 aa).

The N-acetyltransferase domain occupies serine 2–leucine 146. Isoleucine 69–isoleucine 71 is a binding site for acetyl-CoA. Residue glutamate 103 is the Proton acceptor of the active site. Asparagine 108 provides a ligand contact to acetyl-CoA. The active-site Proton donor is the tyrosine 114.

Belongs to the acetyltransferase family. RimI subfamily.

The protein resides in the cytoplasm. It carries out the reaction N-terminal L-alanyl-[ribosomal protein bS18] + acetyl-CoA = N-terminal N(alpha)-acetyl-L-alanyl-[ribosomal protein bS18] + CoA + H(+). Functionally, acetylates the N-terminal alanine of ribosomal protein bS18. In Haemophilus influenzae (strain ATCC 51907 / DSM 11121 / KW20 / Rd), this protein is [Ribosomal protein bS18]-alanine N-acetyltransferase.